A 746-amino-acid polypeptide reads, in one-letter code: tRNA(Met) cytidine acetyltransferase TmcA (746 aa).

The segment at Ala-181–Glu-200 is disordered. Residues Gln-202, Gly-228–Ile-237, and Arg-370 contribute to the ATP site. Residues Val-405 to Pro-617 enclose the N-acetyltransferase domain. Acetyl-CoA contacts are provided by residues Ile-517 to Val-519, Gln-524 to Thr-530, Glu-557, and Arg-564.

It belongs to the RNA cytidine acetyltransferase family. TmcA subfamily.

The protein resides in the cytoplasm. It catalyses the reaction cytidine(34) in elongator tRNA(Met) + acetyl-CoA + ATP + H2O = N(4)-acetylcytidine(34) in elongator tRNA(Met) + ADP + phosphate + CoA + H(+). In terms of biological role, catalyzes the formation of N(4)-acetylcytidine (ac(4)C) at the wobble position of tRNA(Met), by using acetyl-CoA as an acetyl donor and ATP (or GTP). In Nitrosococcus halophilus (strain Nc4), this protein is tRNA(Met) cytidine acetyltransferase TmcA.